We begin with the raw amino-acid sequence, 872 residues long: Probably inactive leucine-rich repeat receptor-like protein kinase At5g06940 (872 aa).

Positions 1–26 (MATRFKHQFSISLALTFFFFFTKTFS) are cleaved as a signal peptide. Topologically, residues 27–540 (FTENEELGNL…RSNFHKKGGK (514 aa)) are extracellular. N-linked (GlcNAc...) asparagine glycans are attached at residues Asn-55, Asn-63, and Asn-86. LRR repeat units lie at residues 79 to 98 (SINL…ICDL), 99 to 122 (PYLT…LSRC), 123 to 146 (VTLE…ISEF), 147 to 169 (SSLK…DLGL), 171 to 193 (FNLQ…AIGK), 195 to 217 (SELV…SFLG), 219 to 243 (LDKL…FVGL), 244 to 267 (TSLR…LGPS), 269 to 292 (KNLV…ICSG), 294 to 316 (RLIN…IGEC), 317 to 340 (LSLE…LWKL), 341 to 365 (PRIK…SLAS), 367 to 389 (LEQV…GLVK), 391 to 412 (LYKF…FCDS), 413 to 435 (PVLS…LKNC), 436 to 459 (KKLV…LADL), 460 to 482 (HVLT…GLQN), and 484 to 506 (KLAL…LVSG). Asn-129 carries an N-linked (GlcNAc...) asparagine glycan. A glycan (N-linked (GlcNAc...) asparagine) is linked at Asn-255. A glycan (N-linked (GlcNAc...) asparagine) is linked at Asn-297. Asn-374 is a glycosylation site (N-linked (GlcNAc...) asparagine). Asn-419 is a glycosylation site (N-linked (GlcNAc...) asparagine). An N-linked (GlcNAc...) asparagine glycan is attached at Asn-489. The helical transmembrane segment at 541–561 (ALVLSLICLALAIATFLAVLY) threads the bilayer. The Cytoplasmic portion of the chain corresponds to 562-872 (RYSRKKVQFK…ISSSVSPVSA (311 aa)). Thr-585 bears the Phosphothreonine mark. A Protein kinase domain is found at 589–863 (LMKVVNESCP…VKVIKLLEGI (275 aa)). ATP-binding positions include 595 to 603 (ESCPSGSEV) and Lys-617. Phosphotyrosine occurs at positions 662, 699, 754, and 761.

The protein belongs to the protein kinase superfamily. Ser/Thr protein kinase family.

The protein resides in the membrane. In Arabidopsis thaliana (Mouse-ear cress), this protein is Probably inactive leucine-rich repeat receptor-like protein kinase At5g06940.